A 439-amino-acid polypeptide reads, in one-letter code: Xaa-Pro dipeptidase (439 aa).

The Mn(2+) site is built by Asp244, Asp255, His335, Glu380, and Glu419.

It belongs to the peptidase M24B family. Bacterial-type prolidase subfamily. The cofactor is Mn(2+).

It carries out the reaction Xaa-L-Pro dipeptide + H2O = an L-alpha-amino acid + L-proline. Splits dipeptides with a prolyl residue in the C-terminal position. This chain is Xaa-Pro dipeptidase, found in Shewanella woodyi (strain ATCC 51908 / MS32).